The following is a 204-amino-acid chain: LexA repressor (204 aa).

The segment at residues 27 to 47 is a DNA-binding region (H-T-H motif); the sequence is VREIGEAVGLASSSTVHGHLA. Catalysis depends on for autocatalytic cleavage activity residues serine 126 and lysine 164.

The protein belongs to the peptidase S24 family. As to quaternary structure, homodimer.

It carries out the reaction Hydrolysis of Ala-|-Gly bond in repressor LexA.. Functionally, represses a number of genes involved in the response to DNA damage (SOS response), including recA and lexA. In the presence of single-stranded DNA, RecA interacts with LexA causing an autocatalytic cleavage which disrupts the DNA-binding part of LexA, leading to derepression of the SOS regulon and eventually DNA repair. In Listeria welshimeri serovar 6b (strain ATCC 35897 / DSM 20650 / CCUG 15529 / CIP 8149 / NCTC 11857 / SLCC 5334 / V8), this protein is LexA repressor.